We begin with the raw amino-acid sequence, 892 residues long: Translation initiation factor IF-2 (892 aa).

Positions 138 to 185 (QRNLAEQQRLAEVDRQRVEEQERKRREEEQAELERQKTESRVVEEILV) are enriched in basic and acidic residues. Disordered regions lie at residues 138–250 (QRNL…EDDS) and 262–298 (AAER…SGAH). The span at 207 to 219 (LPRTVRPTPAARP) shows a compositional bias: low complexity. The tr-type G domain occupies 391 to 560 (PRPPVVTIMG…SIQAEVLELK (170 aa)). GTP-binding positions include 400–407 (GHVDHGKT), 446–450 (DTPGH), and 500–503 (SKID).

It belongs to the TRAFAC class translation factor GTPase superfamily. Classic translation factor GTPase family. IF-2 subfamily.

It is found in the cytoplasm. Functionally, one of the essential components for the initiation of protein synthesis. Protects formylmethionyl-tRNA from spontaneous hydrolysis and promotes its binding to the 30S ribosomal subunits. Also involved in the hydrolysis of GTP during the formation of the 70S ribosomal complex. This chain is Translation initiation factor IF-2, found in Xylella fastidiosa (strain Temecula1 / ATCC 700964).